The primary structure comprises 946 residues: MFDKNKKVSVFAAYRGSATSKNYVQKGTKNFDKNGAAKNNNRNLASKNGGKLKGPLKRSGSYSDGDNGSSSSSGEDEEDDSTDSRGELYDSSESGEEYTLNNHSSQSSPETPAYTRESLKRRNDEAEGSKPIGAKRTSSTPVGQKDEEDDSTDSNGELYDSSESGEEYTLNSHSSQSSPETPANTRESLKRRTDEAEGSKPIGAKRTSSTPVGQKDEEDDSTDSSGELYDSSESGEEYTLNSHSYQSSPETPANTRESLKRRTDEAEGSKPIGAKRTSSTPVGQKDEEDDSTDSSGELYDSSESGEEYTLNSHSSQSSPETPANTRESLNRRNYEAEGSKPIGAKRTSSTPVGQKDEEDDSTDSSGELYDSSESGEEYTLNSHSSQSSPETPANTRESLNRRNYEAEGSKPIGAKRTSSTPVGQSTSAASKKNTVPVKVEVASPNRALLSPQSIEMEPGDSMFCRIKIGVIKSVQPGGDVGAEAGAGQAVNRLEPCHEVHKENSIEVGKRTLAQLIAPMTMATFLRDHWEKSPFRVITTTSGGFSNLISFKMIDKMLIQNHVEYTTNIDVTSYEDGVRKTLNPDGRALPPSVWAHYQRGCSIRILNPSSYLVQLRQLCVKLQEFFHCLVGANVYLTPPESQGFAPHYDDIEAFVLQVEGKKRWRIYAPTKELPRESSGNLSQTELGDPIMDIVLMPGDLLYFPRGWIHQAITEKDSHSLHITLSAYQQQSYANLMEKLMPLVVKESVEQTLKLRKGLPLDIFQNLGVANAEWNGVHRQKLIQHIQNLAQRLMPTEGQIDRALDQLAIKFQHEALPPTIAPQELKRTVYGAQATADKTGHCSLDYELAEGTAVRLLRANIVRLTVDEGVLRCYYYTDNGLEYCKYEPNFFELEPFHGTVIETLIHAYPDYTKIKDLPPMGNDEDRLEFVEALWERGILMVEKPFKKV.

The disordered stretch occupies residues 14–435 (YRGSATSKNY…TSAASKKNTV (422 aa)). Composition is skewed to polar residues over residues 17-28 (SATSKNYVQKGT) and 37-46 (AKNNNRNLAS). Residues 59-73 (SGSYSDGDNGSSSSS) show a composition bias toward low complexity. Positions 99–110 (TLNNHSSQSSPE) are enriched in polar residues. Residues 117 to 128 (ESLKRRNDEAEG) are compositionally biased toward basic and acidic residues. The span at 169-186 (TLNSHSSQSSPETPANTR) shows a compositional bias: polar residues. Positions 187-198 (ESLKRRTDEAEG) are enriched in basic and acidic residues. The segment covering 239 to 256 (TLNSHSYQSSPETPANTR) has biased composition (polar residues). Positions 257–268 (ESLKRRTDEAEG) are enriched in basic and acidic residues. Position 309 is a phosphothreonine (Thr-309). The span at 309–327 (TLNSHSSQSSPETPANTRE) shows a compositional bias: polar residues. Over residues 328–338 (SLNRRNYEAEG) the composition is skewed to basic and acidic residues. At Ser-339 the chain carries Phosphoserine. Polar residues predominate over residues 379–397 (TLNSHSSQSSPETPANTRE). Positions 398–408 (SLNRRNYEAEG) are enriched in basic and acidic residues. The segment covering 416-433 (RTSSTPVGQSTSAASKKN) has biased composition (polar residues). The 137-residue stretch at 606 to 742 (NPSSYLVQLR…NLMEKLMPLV (137 aa)) folds into the JmjC domain. Residues His-646, Asp-648, and His-708 each coordinate Fe cation.

The protein belongs to the ROX family. NO66 subfamily. It depends on Fe(2+) as a cofactor.

It is found in the nucleus. It carries out the reaction N(6),N(6)-dimethyl-L-lysyl(36)-[histone H3] + 2 2-oxoglutarate + 2 O2 = L-lysyl(36)-[histone H3] + 2 formaldehyde + 2 succinate + 2 CO2. In terms of biological role, oxygenase that can act as both a histone lysine demethylase and a ribosomal histidine hydroxylase. Specifically demethylates 'Lys-4' (H3K4me) and 'Lys-36' (H3K36me) of histone H3, thereby playing a central role in histone code. The sequence is that of Bifunctional lysine-specific demethylase and histidyl-hydroxylase NO66 from Drosophila pseudoobscura pseudoobscura (Fruit fly).